An 822-amino-acid chain; its full sequence is DNA gyrase subunit A (822 aa).

The Topo IIA-type catalytic domain occupies 32–497; it reads LPDVRDGLKP…QVLSLEDEDL (466 aa). The active-site O-(5'-phospho-DNA)-tyrosine intermediate is Tyr-120. The GyrA-box motif lies at 524-530; the sequence is QKRGGRG.

This sequence belongs to the type II topoisomerase GyrA/ParC subunit family. In terms of assembly, heterotetramer, composed of two GyrA and two GyrB chains. In the heterotetramer, GyrA contains the active site tyrosine that forms a transient covalent intermediate with DNA, while GyrB binds cofactors and catalyzes ATP hydrolysis.

The protein localises to the cytoplasm. It carries out the reaction ATP-dependent breakage, passage and rejoining of double-stranded DNA.. In terms of biological role, a type II topoisomerase that negatively supercoils closed circular double-stranded (ds) DNA in an ATP-dependent manner to modulate DNA topology and maintain chromosomes in an underwound state. Negative supercoiling favors strand separation, and DNA replication, transcription, recombination and repair, all of which involve strand separation. Also able to catalyze the interconversion of other topological isomers of dsDNA rings, including catenanes and knotted rings. Type II topoisomerases break and join 2 DNA strands simultaneously in an ATP-dependent manner. In Streptococcus pneumoniae (strain ATCC BAA-255 / R6), this protein is DNA gyrase subunit A.